The sequence spans 221 residues: Casparian strip membrane protein 3 (221 aa).

Residues 1–12 (MDIEKAASRREE) are compositionally biased toward basic and acidic residues. The tract at residues 1–28 (MDIEKAASRREEEEPIVQRPKLDKGKGK) is disordered. The Cytoplasmic segment spans residues 1–58 (MDIEKAASRREEEEPIVQRPKLDKGKGKAHVFAPPMNYNRIMDKHKQEKVSAAGWKRG). The chain crosses the membrane as a helical span at residues 59–79 (VAIFDFVLRLIAAITAMAAAA). Topologically, residues 80-109 (KMATTEETLPFFTQFLQFQAEYTDLPTMSS) are extracellular. A helical membrane pass occupies residues 110 to 130 (FVIVNSIVGGYLTLSLPFSIV). At 131–148 (CILRPLAVPPRLFLIICD) the chain is on the cytoplasmic side. A helical transmembrane segment spans residues 149–169 (TAMMGLTMMAASASAAIVYLA). The Extracellular portion of the chain corresponds to 170–194 (HNGNSSSNWLPVCQQFGDFCQGTSG). Asn173 carries N-linked (GlcNAc...) asparagine glycosylation. A helical membrane pass occupies residues 195–215 (AVVASFIAATLLMFLVILSAF). Topologically, residues 216 to 221 (ALKRST) are cytoplasmic.

Belongs to the Casparian strip membrane proteins (CASP) family. In terms of assembly, homodimer and heterodimers.

It localises to the cell membrane. In terms of biological role, regulates membrane-cell wall junctions and localized cell wall deposition. Required for establishment of the Casparian strip membrane domain (CSD) and the subsequent formation of Casparian strips, a cell wall modification of the root endodermis that determines an apoplastic barrier between the intraorganismal apoplasm and the extraorganismal apoplasm and prevents lateral diffusion. The sequence is that of Casparian strip membrane protein 3 from Arabidopsis lyrata subsp. lyrata (Lyre-leaved rock-cress).